A 149-amino-acid chain; its full sequence is Large ribosomal subunit protein uL13 (149 aa).

The protein belongs to the universal ribosomal protein uL13 family. As to quaternary structure, part of the 50S ribosomal subunit.

Functionally, this protein is one of the early assembly proteins of the 50S ribosomal subunit, although it is not seen to bind rRNA by itself. It is important during the early stages of 50S assembly. The protein is Large ribosomal subunit protein uL13 of Borrelia duttonii (strain Ly).